A 343-amino-acid chain; its full sequence is Ribosomal RNA small subunit methyltransferase C (343 aa).

This sequence belongs to the methyltransferase superfamily. RsmC family. As to quaternary structure, monomer.

It is found in the cytoplasm. It catalyses the reaction guanosine(1207) in 16S rRNA + S-adenosyl-L-methionine = N(2)-methylguanosine(1207) in 16S rRNA + S-adenosyl-L-homocysteine + H(+). Functionally, specifically methylates the guanine in position 1207 of 16S rRNA in the 30S particle. This chain is Ribosomal RNA small subunit methyltransferase C, found in Escherichia coli (strain SMS-3-5 / SECEC).